The following is an 88-amino-acid chain: Small ribosomal subunit protein bS18 (88 aa).

Residues 1 to 22 (MSTKNAKPKKEAQRRPSRKAKV) form a disordered region.

This sequence belongs to the bacterial ribosomal protein bS18 family. In terms of assembly, part of the 30S ribosomal subunit. Forms a tight heterodimer with protein bS6.

Functionally, binds as a heterodimer with protein bS6 to the central domain of the 16S rRNA, where it helps stabilize the platform of the 30S subunit. This chain is Small ribosomal subunit protein bS18 (rpsR), found in Thermus thermophilus.